A 200-amino-acid polypeptide reads, in one-letter code: FMN-dependent NADH:quinone oxidoreductase 2 (200 aa).

FMN is bound at residue 135 to 138; that stretch reads SRGG.

The protein belongs to the azoreductase type 1 family. In terms of assembly, homodimer. FMN serves as cofactor.

It carries out the reaction 2 a quinone + NADH + H(+) = 2 a 1,4-benzosemiquinone + NAD(+). The enzyme catalyses N,N-dimethyl-1,4-phenylenediamine + anthranilate + 2 NAD(+) = 2-(4-dimethylaminophenyl)diazenylbenzoate + 2 NADH + 2 H(+). Functionally, quinone reductase that provides resistance to thiol-specific stress caused by electrophilic quinones. In terms of biological role, also exhibits azoreductase activity. Catalyzes the reductive cleavage of the azo bond in aromatic azo compounds to the corresponding amines. In Clostridium acetobutylicum (strain ATCC 824 / DSM 792 / JCM 1419 / IAM 19013 / LMG 5710 / NBRC 13948 / NRRL B-527 / VKM B-1787 / 2291 / W), this protein is FMN-dependent NADH:quinone oxidoreductase 2.